The sequence spans 355 residues: Hydroxylysine kinase (355 aa).

Asp-215 functions as the Proton acceptor in the catalytic mechanism.

It belongs to the aminoglycoside phosphotransferase family.

Its subcellular location is the cytoplasm. It carries out the reaction (5R)-5-hydroxy-L-lysine + GTP = (5R)-5-phosphooxy-L-lysine + GDP + H(+). Functionally, catalyzes the GTP-dependent phosphorylation of 5-hydroxy-L-lysine. The sequence is that of Hydroxylysine kinase (hykk) from Danio rerio (Zebrafish).